Reading from the N-terminus, the 399-residue chain is Ectoine hydrolase (399 aa).

Belongs to the peptidase M24 family.

It is found in the cytoplasm. It catalyses the reaction L-ectoine + H2O = (2S)-2-acetamido-4-aminobutanoate. Its function is as follows. Involved in the degradation of ectoine, which allows H.elongata to utilize ectoine as both a carbon and a nitrogen source for growth. Catalyzes the hydrolysis of ectoine to N-acetyl-L-2,4-diaminobutyric acid (N-Ac-DABA). It can produce both isoforms N-gamma-acetyl-L-2,4-diaminobutyric acid (N-gamma-Ac-DABA) and N-alpha-acetyl-L-2,4-diaminobutyric acid (-Nalpha-Ac-DABA), however N-alpha-Ac-DABA is the essential substrate for the subsequent catabolic enzyme DoeB. The polypeptide is Ectoine hydrolase (Halomonas elongata (strain ATCC 33173 / DSM 2581 / NBRC 15536 / NCIMB 2198 / 1H9)).